A 40-amino-acid chain; its full sequence is Large ribosomal subunit protein bL36B (40 aa).

This sequence belongs to the bacterial ribosomal protein bL36 family.

This chain is Large ribosomal subunit protein bL36B, found in Arthrobacter sp. (strain FB24).